The primary structure comprises 298 residues: Heat stress transcription factor C-2a (298 aa).

The interval 105–128 (SSGGGGAKRKEEAGGCGGGGEAAA) is disordered. The segment at 145–181 (LRREQREIEGRVAAMWRRVQETERRPKQMLAFLVKVV) is hydrophobic repeat HR-A/B. The Nuclear localization signal signature appears at 213–216 (KRPR).

It belongs to the HSF family. Class C subfamily. In terms of assembly, homotrimer. Exhibits temperature-dependent phosphorylation.

The protein resides in the nucleus. Transcriptional regulator that specifically binds DNA of heat shock promoter elements (HSE). The sequence is that of Heat stress transcription factor C-2a (HSFC2A) from Oryza sativa subsp. japonica (Rice).